The chain runs to 355 residues: Protein RecA (355 aa).

67-74 provides a ligand contact to ATP; sequence GPESSGKT.

The protein belongs to the RecA family.

It is found in the cytoplasm. In terms of biological role, can catalyze the hydrolysis of ATP in the presence of single-stranded DNA, the ATP-dependent uptake of single-stranded DNA by duplex DNA, and the ATP-dependent hybridization of homologous single-stranded DNAs. It interacts with LexA causing its activation and leading to its autocatalytic cleavage. The protein is Protein RecA of Shewanella baltica (strain OS195).